Here is a 421-residue protein sequence, read N- to C-terminus: Testin (421 aa).

The PET domain occupies M92 to G199. Residues E133–C164 form a disordered region. Basic and acidic residues predominate over residues P155–C164. LIM zinc-binding domains follow at residues Y234–E297, P299–V359, and Q362–S421.

It belongs to the prickle / espinas / testin family. As to quaternary structure, interacts via LIM domain 1 with ZYX. Interacts (via LIM domain 3) with ENAH and VASP. Interacts with ALKBH4, talin, actin, alpha-actinin, GRIP1 and PXN. Interacts (via LIM domain 2) with ACTL7A (via N-terminus). Heterodimer with ACTL7A; the heterodimer interacts with ENAH to form a heterotrimer.

It localises to the cytoplasm. The protein resides in the cell junction. It is found in the focal adhesion. In terms of biological role, scaffold protein that may play a role in cell adhesion, cell spreading and in the reorganization of the actin cytoskeleton. Plays a role in the regulation of cell proliferation. May act as a tumor suppressor. The sequence is that of Testin (TES) from Oryctolagus cuniculus (Rabbit).